A 202-amino-acid polypeptide reads, in one-letter code: T-cell surface glycoprotein CD3 epsilon chain (202 aa).

The first 21 residues, 1–21 (MQSRNLWRILGLCLLSVGAWG), serve as a signal peptide directing secretion. Residues 22–122 (QDEDFKASDD…VCANCIEVNL (101 aa)) lie on the Extracellular side of the membrane. Residues 37–107 (PEKRFKVSIS…ADSIKEKSYL (71 aa)) form the Ig-like domain. A disulfide bridge links cysteine 54 with cysteine 96. A helical transmembrane segment spans residues 123-143 (MAVVTIIVADICLTLGLLLMV). Residues 144–202 (YYWSKTRKANAKPVMRGTGAGSRPRGQNKEKPPPVPNPDYEPIRKGQQDLYSGLNQRGI) are Cytoplasmic-facing. The segment at 156–202 (PVMRGTGAGSRPRGQNKEKPPPVPNPDYEPIRKGQQDLYSGLNQRGI) is disordered. An NUMB-binding region region spans residues 170 to 187 (QNKEKPPPVPNPDYEPIR). An ITAM domain is found at 173–200 (EKPPPVPNPDYEPIRKGQQDLYSGLNQR). The tract at residues 174–181 (KPPPVPNP) is proline-rich sequence. Residues tyrosine 183 and tyrosine 194 each carry the phosphotyrosine modification. Positions 192–202 (DLYSGLNQRGI) are enriched in polar residues.

In terms of assembly, the TCR-CD3 complex is composed of a CD3D/CD3E and a CD3G/CD3E heterodimers that preferentially associate with TCRalpha and TCRbeta, respectively, to form TCRalpha/CD3E/CD3G and TCRbeta/CD3G/CD3E trimers. In turn, the hexamer interacts with CD3Z homodimer to form the TCR-CD3 complex. Alternatively, TCRalpha and TCRbeta can be replaced by TCRgamma and TCRdelta. Interacts with CD6. Interacts (via Proline-rich sequence) with NCK1; the interaction is ligand dependent but independent of tyrosine kinase activation. Post-translationally, phosphorylated on Tyr residues after T-cell receptor triggering by LCK in association with CD4/CD8.

Its subcellular location is the cell membrane. Its function is as follows. Part of the TCR-CD3 complex present on T-lymphocyte cell surface that plays an essential role in adaptive immune response. When antigen presenting cells (APCs) activate T-cell receptor (TCR), TCR-mediated signals are transmitted across the cell membrane by the CD3 chains CD3D, CD3E, CD3G and CD3Z. All CD3 chains contain immunoreceptor tyrosine-based activation motifs (ITAMs) in their cytoplasmic domain. Upon TCR engagement, these motifs become phosphorylated by Src family protein tyrosine kinases LCK and FYN, resulting in the activation of downstream signaling pathways. In addition of this role of signal transduction in T-cell activation, CD3E plays an essential role in correct T-cell development. Also participates in internalization and cell surface down-regulation of TCR-CD3 complexes via endocytosis sequences present in CD3E cytosolic region. In addition to its role as a TCR coreceptor, it serves as a receptor for ITPRIPL1. Ligand recognition inhibits T-cell activation by promoting interaction with NCK1, which prevents CD3E-ZAP70 interaction and blocks the ERK-NFkB signaling cascade and calcium influx. The protein is T-cell surface glycoprotein CD3 epsilon chain (CD3E) of Canis lupus familiaris (Dog).